The chain runs to 280 residues: Nitrogenase iron protein (280 aa).

ATP is bound at residue 9–16 (GKGGIGKS). C97 contacts [4Fe-4S] cluster. Position 100 is an ADP-ribosylarginine; by dinitrogenase reductase ADP-ribosyltransferase (R100). C132 contributes to the [4Fe-4S] cluster binding site.

It belongs to the NifH/BchL/ChlL family. In terms of assembly, homodimer. [4Fe-4S] cluster is required as a cofactor. Post-translationally, the reversible ADP-ribosylation of Arg-100 inactivates the nitrogenase reductase and regulates nitrogenase activity.

The catalysed reaction is N2 + 8 reduced [2Fe-2S]-[ferredoxin] + 16 ATP + 16 H2O = H2 + 8 oxidized [2Fe-2S]-[ferredoxin] + 2 NH4(+) + 16 ADP + 16 phosphate + 6 H(+). The key enzymatic reactions in nitrogen fixation are catalyzed by the nitrogenase complex, which has 2 components: the iron protein and the molybdenum-iron protein. The sequence is that of Nitrogenase iron protein from Desulforudis audaxviator (strain MP104C).